The sequence spans 164 residues: Crossover junction endodeoxyribonuclease RuvC (164 aa).

Residues Asp7, Glu67, and Asp140 contribute to the active site. Asp7, Glu67, and Asp140 together coordinate Mg(2+).

The protein belongs to the RuvC family. In terms of assembly, homodimer which binds Holliday junction (HJ) DNA. The HJ becomes 2-fold symmetrical on binding to RuvC with unstacked arms; it has a different conformation from HJ DNA in complex with RuvA. In the full resolvosome a probable DNA-RuvA(4)-RuvB(12)-RuvC(2) complex forms which resolves the HJ. It depends on Mg(2+) as a cofactor.

Its subcellular location is the cytoplasm. It carries out the reaction Endonucleolytic cleavage at a junction such as a reciprocal single-stranded crossover between two homologous DNA duplexes (Holliday junction).. In terms of biological role, the RuvA-RuvB-RuvC complex processes Holliday junction (HJ) DNA during genetic recombination and DNA repair. Endonuclease that resolves HJ intermediates. Cleaves cruciform DNA by making single-stranded nicks across the HJ at symmetrical positions within the homologous arms, yielding a 5'-phosphate and a 3'-hydroxyl group; requires a central core of homology in the junction. The consensus cleavage sequence is 5'-(A/T)TT(C/G)-3'. Cleavage occurs on the 3'-side of the TT dinucleotide at the point of strand exchange. HJ branch migration catalyzed by RuvA-RuvB allows RuvC to scan DNA until it finds its consensus sequence, where it cleaves and resolves the cruciform DNA. The protein is Crossover junction endodeoxyribonuclease RuvC of Alkaliphilus metalliredigens (strain QYMF).